The chain runs to 510 residues: GMP synthase [glutamine-hydrolyzing] (510 aa).

The region spanning 5-195 is the Glutamine amidotransferase type-1 domain; that stretch reads TVVVLDFGGQ…LFEICGLRGD (191 aa). Cys82 (nucleophile) is an active-site residue. Residues His169 and Glu171 contribute to the active site. The GMPS ATP-PPase domain occupies 196–385; it reads WDLSDFISEA…LGIPAEILWR (190 aa). An ATP-binding site is contributed by 223 to 229; sequence SGGVDSS.

As to quaternary structure, homodimer.

It catalyses the reaction XMP + L-glutamine + ATP + H2O = GMP + L-glutamate + AMP + diphosphate + 2 H(+). It participates in purine metabolism; GMP biosynthesis; GMP from XMP (L-Gln route): step 1/1. Catalyzes the synthesis of GMP from XMP. The sequence is that of GMP synthase [glutamine-hydrolyzing] from Syntrophomonas wolfei subsp. wolfei (strain DSM 2245B / Goettingen).